A 202-amino-acid polypeptide reads, in one-letter code: uncharacterized protein (202 aa).

This is an uncharacterized protein from Methanocaldococcus jannaschii (strain ATCC 43067 / DSM 2661 / JAL-1 / JCM 10045 / NBRC 100440) (Methanococcus jannaschii).